The sequence spans 316 residues: Retinol dehydrogenase 12 (316 aa).

Residue 46–52 (GANTGIG) coordinates NADP(+). Residue serine 175 participates in substrate binding. Tyrosine 200 (proton acceptor) is an active-site residue.

It belongs to the short-chain dehydrogenases/reductases (SDR) family. In terms of tissue distribution, expressed in the retina.

The catalysed reaction is all-trans-retinol + NADP(+) = all-trans-retinal + NADPH + H(+). The enzyme catalyses 11-cis-retinol + NADP(+) = 11-cis-retinal + NADPH + H(+). It carries out the reaction 9-cis-retinol + NADP(+) = 9-cis-retinal + NADPH + H(+). It catalyses the reaction a 4-hydroxynonen-1-ol + NADP(+) = a 4-hydroxynonenal + NADPH + H(+). The catalysed reaction is (E)-non-2-en-1-ol + NADP(+) = (E)-non-2-enal + NADPH + H(+). The enzyme catalyses (Z)-non-6-en-1-ol + NADP(+) = (Z)-non-6-enal + NADPH + H(+). It carries out the reaction nonan-1-ol + NADP(+) = nonanal + NADPH + H(+). Its pathway is cofactor metabolism; retinol metabolism. Functionally, retinoids dehydrogenase/reductase with a clear preference for NADP. Displays high activity towards 9-cis, 11-cis and all-trans-retinal. Shows very weak activity towards 13-cis-retinol. Also exhibits activity, albeit with lower affinity than for retinaldehydes, towards lipid peroxidation products (C9 aldehydes) such as 4-hydroxynonenal and trans-2-nonenal. May play an important function in photoreceptor cells to detoxify 4-hydroxynonenal and potentially other toxic aldehyde products resulting from lipid peroxidation. Has no dehydrogenase activity towards steroids. The protein is Retinol dehydrogenase 12 (RDH12) of Bos taurus (Bovine).